A 163-amino-acid chain; its full sequence is Nucleotide-binding protein EAT1b_2037 (163 aa).

It belongs to the YajQ family.

Nucleotide-binding protein. In Exiguobacterium sp. (strain ATCC BAA-1283 / AT1b), this protein is Nucleotide-binding protein EAT1b_2037.